The following is a 142-amino-acid chain: uncharacterized protein (142 aa).

Positions Ile-19 to Ser-54 are disordered. A compositionally biased stretch (basic residues) spans His-26 to His-35.

This is an uncharacterized protein from Saccharomyces cerevisiae (strain ATCC 204508 / S288c) (Baker's yeast).